The following is a 598-amino-acid chain: Elongation factor 4 (598 aa).

The 183-residue stretch at 2-184 (KNIRNFSIIA…EIVHKIPAPE (183 aa)) folds into the tr-type G domain. GTP contacts are provided by residues 14 to 19 (DHGKST) and 131 to 134 (NKID).

This sequence belongs to the TRAFAC class translation factor GTPase superfamily. Classic translation factor GTPase family. LepA subfamily.

The protein localises to the cell inner membrane. It carries out the reaction GTP + H2O = GDP + phosphate + H(+). Functionally, required for accurate and efficient protein synthesis under certain stress conditions. May act as a fidelity factor of the translation reaction, by catalyzing a one-codon backward translocation of tRNAs on improperly translocated ribosomes. Back-translocation proceeds from a post-translocation (POST) complex to a pre-translocation (PRE) complex, thus giving elongation factor G a second chance to translocate the tRNAs correctly. Binds to ribosomes in a GTP-dependent manner. In Pasteurella multocida (strain Pm70), this protein is Elongation factor 4.